Reading from the N-terminus, the 510-residue chain is 2,3-bisphosphoglycerate-independent phosphoglycerate mutase (510 aa).

Mn(2+)-binding residues include D12 and S62. Residue S62 is the Phosphoserine intermediate of the active site. Substrate is bound by residues H123, R152 to D153, R184, R190, R257 to R260, and K331. Mn(2+)-binding residues include D399, H403, D440, H441, and H458.

It belongs to the BPG-independent phosphoglycerate mutase family. As to quaternary structure, monomer. Mn(2+) serves as cofactor.

The catalysed reaction is (2R)-2-phosphoglycerate = (2R)-3-phosphoglycerate. It participates in carbohydrate degradation; glycolysis; pyruvate from D-glyceraldehyde 3-phosphate: step 3/5. Functionally, catalyzes the interconversion of 2-phosphoglycerate and 3-phosphoglycerate. In Lawsonia intracellularis (strain PHE/MN1-00), this protein is 2,3-bisphosphoglycerate-independent phosphoglycerate mutase.